Reading from the N-terminus, the 78-residue chain is TP53-regulated inhibitor of apoptosis 1-A (78 aa).

Residues 1-52 adopt a coiled-coil conformation; it reads MNSVGEECTDMKRDYDQCFNRWFAEKFLKGAGSGDPCTELFRRYRECVQKAI. In terms of domain architecture, CHCH spans 5–55; that stretch reads GEECTDMKRDYDQCFNRWFAEKFLKGAGSGDPCTELFRRYRECVQKAIKDK. 2 consecutive short sequence motifs (cx9C motif) follow at residues 8–18 and 37–47; these read CTDMKRDYDQC and CTELFRRYREC. 2 disulfide bridges follow: Cys-8-Cys-47 and Cys-18-Cys-37.

Belongs to the TRIAP1/MDM35 family. As to quaternary structure, monomer. Forms a complex with prelid1 in the mitochondrion intermembrane space. Interacts with prelid3a.

Its subcellular location is the mitochondrion. It localises to the mitochondrion intermembrane space. It catalyses the reaction a 1,2-diacyl-sn-glycero-3-phosphate(in) = a 1,2-diacyl-sn-glycero-3-phosphate(out). Its function is as follows. Involved in the modulation of the mitochondrial apoptotic pathway by ensuring the accumulation of cardiolipin (CL) in mitochondrial membranes. The triap1:prelid1 complex probably functions as a phosphatidic acid (PA) transporter across the mitochondrion intermembrane space to provide PA for cardiolipin CL synthesis in the inner membrane. Likewise, the triap1:prelid3a complex mediates the transfer of phosphatidic acid (PA) between liposomes (in vitro) and probably functions as a PA transporter across the mitochondrion intermembrane space (in vivo). Mediates cell survival by inhibiting activation of caspase-9 which prevents induction of apoptosis. Required for pronephros development; probably involved at an early stage in the formation of pronephric components derived from the somatic layer. The sequence is that of TP53-regulated inhibitor of apoptosis 1-A (triap1-a) from Xenopus laevis (African clawed frog).